A 227-amino-acid chain; its full sequence is UPF0173 metal-dependent hydrolase Saci_1512 (227 aa).

It belongs to the UPF0173 family.

The polypeptide is UPF0173 metal-dependent hydrolase Saci_1512 (Sulfolobus acidocaldarius (strain ATCC 33909 / DSM 639 / JCM 8929 / NBRC 15157 / NCIMB 11770)).